A 74-amino-acid chain; its full sequence is UPF0270 protein NT01EI_3666 (74 aa).

Belongs to the UPF0270 family.

The polypeptide is UPF0270 protein NT01EI_3666 (Edwardsiella ictaluri (strain 93-146)).